We begin with the raw amino-acid sequence, 240 residues long: Small ribosomal subunit protein eS4 (240 aa).

The region spanning 37-99 (VPLVVLLRDV…RGEFFRVFPD (63 aa)) is the S4 RNA-binding domain.

Belongs to the eukaryotic ribosomal protein eS4 family.

This is Small ribosomal subunit protein eS4 from Halorubrum lacusprofundi (strain ATCC 49239 / DSM 5036 / JCM 8891 / ACAM 34).